A 234-amino-acid chain; its full sequence is LexA repressor (234 aa).

A disordered region spans residues 1-29; it reads MSDAANPEGHKRSLPGRPPGIRADSSGLT. Residues 52–72 constitute a DNA-binding region (H-T-H motif); it reads MREIGQAVGLSSTSSVAHQLM. The segment at 90–109 is disordered; it reads YEVRGSDQAASVQPTDTAGK. Catalysis depends on for autocatalytic cleavage activity residues serine 158 and lysine 195.

The protein belongs to the peptidase S24 family. As to quaternary structure, homodimer.

It catalyses the reaction Hydrolysis of Ala-|-Gly bond in repressor LexA.. Its function is as follows. Represses a number of genes involved in the response to DNA damage (SOS response), including recA and lexA. In the presence of single-stranded DNA, RecA interacts with LexA causing an autocatalytic cleavage which disrupts the DNA-binding part of LexA, leading to derepression of the SOS regulon and eventually DNA repair. This chain is LexA repressor, found in Streptomyces coelicolor (strain ATCC BAA-471 / A3(2) / M145).